A 161-amino-acid chain; its full sequence is Glycine cleavage system H protein 2 (161 aa).

Residues 34–116 (TVTVGVTDIG…YGEGWIAKLK (83 aa)) enclose the Lipoyl-binding domain. At Lys75 the chain carries N6-lipoyllysine.

It belongs to the GcvH family. As to quaternary structure, the glycine cleavage system is composed of four proteins: P, T, L and H. (R)-lipoate is required as a cofactor.

In terms of biological role, the glycine cleavage system catalyzes the degradation of glycine. The H protein shuttles the methylamine group of glycine from the P protein to the T protein. This chain is Glycine cleavage system H protein 2, found in Aquifex aeolicus (strain VF5).